A 1070-amino-acid polypeptide reads, in one-letter code: TSC22 domain family protein 1 (1070 aa).

A required for interaction with TGFBR1 and promotion of TGF-beta signaling region spans residues 1–98 (MHQPPESTAA…SQAQLQAQPL (98 aa)). Disordered regions lie at residues 1–110 (MHQP…KKSG), 125–289 (ISSN…PASV), 458–487 (VTSE…VGSG), 604–637 (YSQA…STQM), and 830–858 (TSQV…AQTP). Over residues 36-45 (GSASALNAAG) the composition is skewed to low complexity. Residues 58–70 (FPPPSLLQPPPPA) are compositionally biased toward pro residues. The span at 84–100 (SLNLLSQAQLQAQPLAP) shows a compositional bias: low complexity. Residues 133-142 (EDTESYDDLD) show a composition bias toward acidic residues. The segment covering 216-240 (HPHHLHHHHHIHHGHHLQHGHHHPS) has biased composition (basic residues). Over residues 241–250 (HVAVASASIP) the composition is skewed to low complexity. Positions 261 to 271 (KLSTTGSSDSI) are enriched in polar residues. Ser-263 carries the phosphoserine modification. Composition is skewed to low complexity over residues 272–289 (TPVA…PASV) and 465–478 (TSGS…STRS). Residues 611 to 622 (VQTPLPGAPPPQ) are compositionally biased toward pro residues. Residues 830–845 (TSQVSSAGPSGMPSAP) are compositionally biased toward low complexity. Polar residues predominate over residues 849 to 858 (VPPQNIAQTP). Residues 1003 to 1024 (LKEQIKELIEKNSQLEQENNLL) are leucine-zipper. Residues 1034–1070 (AQFQAQLQTGSPPATTQPQGTTQPPAQPASQGSGPTA) form a disordered region. Over residues 1041 to 1070 (QTGSPPATTQPQGTTQPPAQPASQGSGPTA) the composition is skewed to low complexity.

This sequence belongs to the TSC-22/Dip/Bun family. In terms of assembly, forms homodimers. Forms heterodimers. Component of a complex composed of TSC22D1 (via N-terminus), TGFBR1 and TGFBR2; the interaction between TSC22D1 and TGFBR1 is inhibited by SMAD7 and promoted by TGFB1. Interacts with SMAD7; the interaction requires TGF-beta and the interaction is inhibited by TGFBR1. Interacts with TPT1/fortilin; interaction results in the destabilization of TSC22D1 protein and prevents TSC22D1-mediated apoptosis. Interacts with SMAD4 (via N-terminus). Interacts with ACVRL1/ALK1, ACVR1/ALK2, BMPR1A/ALK3, ACVR1B/ALK4, BMPR1B/ALK6, ACVR2A/ACTRII, and BMPR2. Interacts with SMAD6. Interacts with TFE3; the interaction is enhanced in the presence of TGF-beta. Forms a heterodimer with TSC22D4/THG1. As to quaternary structure, forms a heterodimer with TSC22D4/THG1. Interacts with histone H1-2. Interacts with GNL3.

The protein localises to the cytoplasm. It localises to the nucleus. Its subcellular location is the cell membrane. It is found in the mitochondrion. Functionally, transcriptional repressor. Acts on the C-type natriuretic peptide (CNP) promoter. Acts to promote CASP3-mediated apoptosis. Positively regulates TGF-beta signaling by interacting with SMAD7 which inhibits binding of SMAD7 to TGFBR1, preventing recruitment of SMURF ubiquitin ligases to TGFBR1 and inhibiting SMURF-mediated ubiquitination and degradation of TGFBR1. Contributes to enhancement of TGF-beta signaling by binding to and modulating the transcription activator activity of SMAD4. Promotes TGF-beta-induced transcription of COL1A2; via its interaction with TFE3 at E-boxes in the gene proximal promoter. Plays a role in the repression of hematopoietic precursor cell growth. Promotes IL2 deprivation-induced apoptosis in T-lymphocytes, via repression of TSC22D3/GILZ transcription and activation of the caspase cascade. May act to negatively regulate TGFB3 signaling and thereby inhibit cell death in mammary gland cells. In terms of biological role, positively regulates cell death in response to TGFB3 during mammary gland involution. The protein is TSC22 domain family protein 1 of Pongo abelii (Sumatran orangutan).